Consider the following 353-residue polypeptide: NADH-quinone oxidoreductase subunit H (353 aa).

9 helical membrane passes run 8–28 (LLVYLVILFGFVIVSVLLFIW), 75–95 (GVFWLAPLVAFVPVMLMFAAI), 108–128 (IGILYILAVSSVTVIGIFMAG), 148–168 (VSYEIPLVLSILGVVMLTGSL), 178–198 (SVPFVLLQPLGFFVYLSAAMA), 229–249 (LFYLMEYAEVLAISAIATTLF), 258–278 (LHPVIWFITKVLIIFMFIIWV), 297–317 (FLLPLSLANLVITAFEILAAP), and 319–339 (MNTAVLIGINIAVMFGLILLF).

It belongs to the complex I subunit 1 family. As to quaternary structure, NDH-1 is composed of 14 different subunits. Subunits NuoA, H, J, K, L, M, N constitute the membrane sector of the complex.

It is found in the cell membrane. It catalyses the reaction a quinone + NADH + 5 H(+)(in) = a quinol + NAD(+) + 4 H(+)(out). In terms of biological role, NDH-1 shuttles electrons from NADH, via FMN and iron-sulfur (Fe-S) centers, to quinones in the respiratory chain. The immediate electron acceptor for the enzyme in this species is believed to be ubiquinone. Couples the redox reaction to proton translocation (for every two electrons transferred, four hydrogen ions are translocated across the cytoplasmic membrane), and thus conserves the redox energy in a proton gradient. This subunit may bind ubiquinone. This chain is NADH-quinone oxidoreductase subunit H, found in Dehalococcoides mccartyi (strain ATCC BAA-2266 / KCTC 15142 / 195) (Dehalococcoides ethenogenes (strain 195)).